The following is a 222-amino-acid chain: Translation initiation factor 6 (222 aa).

Belongs to the eIF-6 family.

Binds to the 50S ribosomal subunit and prevents its association with the 30S ribosomal subunit to form the 70S initiation complex. The protein is Translation initiation factor 6 of Methanothermobacter thermautotrophicus (strain ATCC 29096 / DSM 1053 / JCM 10044 / NBRC 100330 / Delta H) (Methanobacterium thermoautotrophicum).